The following is a 684-amino-acid chain: Dixin (684 aa).

Residues 20–127 (EQQLQAYVAW…LVLALAAHFK (108 aa)) form the Calponin-homology (CH) domain. Residues 127 to 300 (KPGSSRTVSQ…LEKEMEEAKK (174 aa)) form an actin-binding region. A Phosphoserine modification is found at Ser-186. The interval 207–235 (GQQRSPSESSCSSLTSPSPIHSAKSESII) is disordered. The segment covering 211-228 (SPSESSCSSLTSPSPIHS) has biased composition (low complexity). At Ser-231 the chain carries Phosphoserine. Coiled-coil stretches lie at residues 277 to 308 (EATW…LQAL) and 336 to 461 (LIII…LERE). A disordered region spans residues 560 to 597 (KKQERKVRGRSPRNQASSEYRASWPPNSTLPHSQSSPA). Residues 571–597 (PRNQASSEYRASWPPNSTLPHSQSSPA) are compositionally biased toward polar residues. Ser-592 is subject to Phosphoserine. The DIX domain maps to 602 to 682 (CTKVLYFTDR…KIVAWVEDHR (81 aa)).

Belongs to the DIXDC1 family. In terms of assembly, may bind filamentous actin. Interacts with the complex composed of DVL2 and Rac. Interacts with AXIN1; competes with MAP3K1. Interacts with MAP3K4 preventing MAP3K4 interaction with AXIN1. Directly interacts (via DIX domain) with DVL2 (via DIX domain). Interacts with gamma-tubulin. In terms of processing, phosphorylated on tyrosine and serine residues. Post-translationally, polyubiquitinated, leading to its proteasomal degradation. WNT3A signaling increases DIXDC1 protein levels by inhibiting its ubiquitination and subsequent degradation.

The protein resides in the cell junction. The protein localises to the focal adhesion. It localises to the cytoplasm. It is found in the cytoskeleton. Its subcellular location is the stress fiber. Positive effector of the Wnt signaling pathway; activates WNT3A signaling via DVL2. Regulates JNK activation by AXIN1 and DVL2. The chain is Dixin (Dixdc1) from Rattus norvegicus (Rat).